A 109-amino-acid chain; its full sequence is Parvalbumin, muscle (109 aa).

A1 carries the post-translational modification N-acetylalanine. 2 consecutive EF-hand domains span residues 38–73 and 77–109; these read KSPE…FTPD and LSDK…VAES. D51, D53, S55, E62, D90, D92, D94, K96, and E101 together coordinate Ca(2+).

It belongs to the parvalbumin family.

Its function is as follows. In muscle, parvalbumin is thought to be involved in relaxation after contraction. It binds two calcium ions. This chain is Parvalbumin, muscle, found in Gallus gallus (Chicken).